The chain runs to 179 residues: ADP-ribosylation factor-like protein 5A (179 aa).

A lipid anchor (N-myristoyl glycine) is attached at glycine 2. GTP is bound by residues 23-30 (GLDNAGKT), 66-70 (DIGGQ), 125-128 (NKQD), and alanine 159.

This sequence belongs to the small GTPase superfamily. Arf family. In terms of tissue distribution, low amounts were found in most tissues examined with highest levels in brain, intestine and thymus.

Functionally, lacks ADP-ribosylation enhancing activity. The sequence is that of ADP-ribosylation factor-like protein 5A (Arl5a) from Rattus norvegicus (Rat).